The sequence spans 156 residues: dCTP deaminase (156 aa).

Residues 79–84 (RSSLAR), Asp-95, Gln-124, and Tyr-138 each bind dCTP.

The protein belongs to the dCTP deaminase family. Homotrimer.

It catalyses the reaction dCTP + H2O + H(+) = dUTP + NH4(+). The protein operates within pyrimidine metabolism; dUMP biosynthesis; dUMP from dCTP (dUTP route): step 1/2. In terms of biological role, catalyzes the deamination of dCTP to dUTP. This is dCTP deaminase from Pyrococcus horikoshii (strain ATCC 700860 / DSM 12428 / JCM 9974 / NBRC 100139 / OT-3).